The chain runs to 145 residues: Large-conductance mechanosensitive channel (145 aa).

Transmembrane regions (helical) follow at residues 14–34, 38–58, and 81–101; these read VMDL…VKSL, LIMP…YFLP, and GSFL…FLMV.

Belongs to the MscL family. Homopentamer.

The protein localises to the cell inner membrane. Its function is as follows. Channel that opens in response to stretch forces in the membrane lipid bilayer. May participate in the regulation of osmotic pressure changes within the cell. The polypeptide is Large-conductance mechanosensitive channel (Rhizobium leguminosarum bv. trifolii (strain WSM2304)).